A 265-amino-acid chain; its full sequence is Homeobox protein CDX-1 (265 aa).

Positions 9-153 (KDSPVYPGPA…GGGGSGKTRT (145 aa)) are disordered. Pro residues predominate over residues 30–42 (YGPPAPPPAPPQY). Over residues 73–92 (AAAYGPGPAAPAASPASLAF) the composition is skewed to low complexity. Residues 93-108 (GPPPDFSPVPAPPGPG) show a composition bias toward pro residues. Over residues 110–126 (GLLAQPLGGPGTPSSPG) the composition is skewed to low complexity. Residues 154-213 (KDKYRVVYTDHQRLELEKEFHYSRYITIRRKSELAANLGLTERQVKIWFQNRRAKERKVN) constitute a DNA-binding region (homeobox). The interaction with DNA stretch occupies residues 157-178 (YRVVYTDHQRLELEKEFHYSRY). Residues 196-207 (RQVKIWFQNRRA) form an interaction with 5-mCpG DNA region. Positions 207–217 (AKERKVNKKKQ) are enriched in basic residues. Residues 207-265 (AKERKVNKKKQQQQQPPQPPMAHDITATPAGPSLGGLCPSNTSLLATSSPMPVKEEFLP) form a disordered region. A compositionally biased stretch (polar residues) spans 245–256 (PSNTSLLATSSP).

This sequence belongs to the Caudal homeobox family. Intestinal epithelium.

It is found in the nucleus. In terms of biological role, plays a role in transcriptional regulation. Involved in activated KRAS-mediated transcriptional activation of PRKD1 in colorectal cancer (CRC) cells. Binds to the PRKD1 promoter in colorectal cancer (CRC) cells. Could play a role in the terminal differentiation of the intestine. Binds preferentially to methylated DNA. This Homo sapiens (Human) protein is Homeobox protein CDX-1 (CDX1).